Consider the following 60-residue polypeptide: UPF0434 protein Aave_2563 (60 aa).

It belongs to the UPF0434 family.

This Paracidovorax citrulli (strain AAC00-1) (Acidovorax citrulli) protein is UPF0434 protein Aave_2563.